Reading from the N-terminus, the 334-residue chain is Protein-methionine-sulfoxide reductase catalytic subunit MsrP (334 aa).

Positions M1–A44 form a signal peptide, tat-type signal. Mo-molybdopterin is bound by residues N88, Y91–E92, C146, T181, N233, R238, and G249–K251.

This sequence belongs to the MsrP family. Heterodimer of a catalytic subunit (MsrP) and a heme-binding subunit (MsrQ). Mo-molybdopterin serves as cofactor. Post-translationally, predicted to be exported by the Tat system. The position of the signal peptide cleavage has not been experimentally proven.

The protein localises to the periplasm. The enzyme catalyses L-methionyl-[protein] + a quinone + H2O = L-methionyl-(S)-S-oxide-[protein] + a quinol. It carries out the reaction L-methionyl-[protein] + a quinone + H2O = L-methionyl-(R)-S-oxide-[protein] + a quinol. Its function is as follows. Part of the MsrPQ system that repairs oxidized periplasmic proteins containing methionine sulfoxide residues (Met-O), using respiratory chain electrons. Thus protects these proteins from oxidative-stress damage caused by reactive species of oxygen and chlorine generated by the host defense mechanisms. MsrPQ is essential for the maintenance of envelope integrity under bleach stress, rescuing a wide series of structurally unrelated periplasmic proteins from methionine oxidation, including the primary periplasmic chaperone SurA and the lipoprotein Pal. The catalytic subunit MsrP is non-stereospecific, being able to reduce both (R-) and (S-) diastereoisomers of methionine sulfoxide. The chain is Protein-methionine-sulfoxide reductase catalytic subunit MsrP from Shigella dysenteriae serotype 1 (strain Sd197).